A 610-amino-acid chain; its full sequence is Dihydroxy-acid dehydratase (610 aa).

Position 81 (aspartate 81) interacts with Mg(2+). Position 122 (cysteine 122) interacts with [2Fe-2S] cluster. Aspartate 123 and lysine 124 together coordinate Mg(2+). Lysine 124 bears the N6-carboxylysine mark. Cysteine 193 serves as a coordination point for [2Fe-2S] cluster. Mg(2+) is bound at residue glutamate 489. Catalysis depends on serine 515, which acts as the Proton acceptor.

This sequence belongs to the IlvD/Edd family. As to quaternary structure, homodimer. [2Fe-2S] cluster serves as cofactor. The cofactor is Mg(2+).

The catalysed reaction is (2R)-2,3-dihydroxy-3-methylbutanoate = 3-methyl-2-oxobutanoate + H2O. It carries out the reaction (2R,3R)-2,3-dihydroxy-3-methylpentanoate = (S)-3-methyl-2-oxopentanoate + H2O. Its pathway is amino-acid biosynthesis; L-isoleucine biosynthesis; L-isoleucine from 2-oxobutanoate: step 3/4. It functions in the pathway amino-acid biosynthesis; L-valine biosynthesis; L-valine from pyruvate: step 3/4. In terms of biological role, functions in the biosynthesis of branched-chain amino acids. Catalyzes the dehydration of (2R,3R)-2,3-dihydroxy-3-methylpentanoate (2,3-dihydroxy-3-methylvalerate) into 2-oxo-3-methylpentanoate (2-oxo-3-methylvalerate) and of (2R)-2,3-dihydroxy-3-methylbutanoate (2,3-dihydroxyisovalerate) into 2-oxo-3-methylbutanoate (2-oxoisovalerate), the penultimate precursor to L-isoleucine and L-valine, respectively. This Xylella fastidiosa (strain M23) protein is Dihydroxy-acid dehydratase.